Reading from the N-terminus, the 476-residue chain is H2.0-like homeobox protein (476 aa).

Disordered stretches follow at residues 121-170 (HLPQ…SSKD), 328-401 (WRHS…HQTT), and 413-476 (TASS…LAGL). Residues 158–168 (HHSGSAPAPSS) are compositionally biased toward low complexity. A DNA-binding region (homeobox) is located at residues 273–332 (RSWSRAVFSNLQRKGLEKRFEIQKYVTKPDRKQLAAMLGLTDAQVKVWFQNRRMKWRHSK). Basic and acidic residues-rich tracts occupy residues 331-346 (SKEAQAQKDKDKEAGE) and 355-368 (EGEREERSPSRSEG). Over residues 369 to 379 (EAESESSDSES) the composition is skewed to acidic residues. Basic and acidic residues predominate over residues 386–397 (DTERTEGTERSL). Low complexity predominate over residues 413–446 (TASSSASGSSFSFSSSSSLGSSNGSAGSASSLGS). Residues 455 to 464 (HQPSVTSGPQ) show a composition bias toward polar residues.

Belongs to the H2.0 homeobox family.

It is found in the nucleus. In terms of biological role, transcription factor required for TBX21/T-bet-dependent maturation of Th1 cells as well as maintenance of Th1-specific gene expression. Involved in embryogenesis and hematopoiesis. This chain is H2.0-like homeobox protein (Hlx), found in Rattus norvegicus (Rat).